The following is a 193-amino-acid chain: Potassium-transporting ATPase KdpC subunit (193 aa).

Residues 14-34 (ITFTFLVLCGLVYPLIVTGIA) form a helical membrane-spanning segment.

It belongs to the KdpC family. As to quaternary structure, the system is composed of three essential subunits: KdpA, KdpB and KdpC.

The protein resides in the cell membrane. Part of the high-affinity ATP-driven potassium transport (or Kdp) system, which catalyzes the hydrolysis of ATP coupled with the electrogenic transport of potassium into the cytoplasm. This subunit acts as a catalytic chaperone that increases the ATP-binding affinity of the ATP-hydrolyzing subunit KdpB by the formation of a transient KdpB/KdpC/ATP ternary complex. The sequence is that of Potassium-transporting ATPase KdpC subunit from Bacillus cereus (strain B4264).